A 351-amino-acid chain; its full sequence is Dihydroorotate dehydrogenase (quinone) (351 aa).

FMN contacts are provided by residues 67–71 and threonine 91; that span reads AGFDK. A substrate-binding site is contributed by lysine 71. Substrate is bound at residue 116–120; sequence NAMGF. Positions 145 and 178 each coordinate FMN. Substrate is bound at residue asparagine 178. Serine 181 (nucleophile) is an active-site residue. A substrate-binding site is contributed by asparagine 183. The FMN site is built by lysine 214 and threonine 242. 243-244 serves as a coordination point for substrate; sequence NT. FMN-binding positions include glycine 262, glycine 291, and 312–313; that span reads YS.

This sequence belongs to the dihydroorotate dehydrogenase family. Type 2 subfamily. As to quaternary structure, monomer. The cofactor is FMN.

It localises to the cell membrane. The catalysed reaction is (S)-dihydroorotate + a quinone = orotate + a quinol. It functions in the pathway pyrimidine metabolism; UMP biosynthesis via de novo pathway; orotate from (S)-dihydroorotate (quinone route): step 1/1. Functionally, catalyzes the conversion of dihydroorotate to orotate with quinone as electron acceptor. The chain is Dihydroorotate dehydrogenase (quinone) from Helicobacter pylori (strain G27).